A 245-amino-acid chain; its full sequence is UPF0246 protein cgR_1824 (245 aa).

This sequence belongs to the UPF0246 family.

The polypeptide is UPF0246 protein cgR_1824 (Corynebacterium glutamicum (strain R)).